A 425-amino-acid chain; its full sequence is Probable G-protein coupled receptor 63 (425 aa).

The Extracellular portion of the chain corresponds to 1–87 (MVVSGVLTAP…VFKSLNLAVQ (87 aa)). N22, N34, and N68 each carry an N-linked (GlcNAc...) asparagine glycan. Residues 88–112 (IILSAIMIFILFVSFLGNLVVCLMV) traverse the membrane as a helical segment. Residues 113 to 123 (YQKAAMRSAIN) lie on the Cytoplasmic side of the membrane. Residues 124 to 148 (ILLASLAFADMLLAVLNMPFALVTI) form a helical membrane-spanning segment. Over 149–165 (LTTRWIFGKFFCRLSAM) the chain is Extracellular. The chain crosses the membrane as a helical span at residues 166-190 (FFWLFVIEGVAILLIISIDRFLIIV). Residues 191–202 (QRQDKLNPYRAK) lie on the Cytoplasmic side of the membrane. A helical membrane pass occupies residues 203 to 222 (VLIAVSWATAFSVAFPLAVG). At 223-247 (NPDLQIPSRAPQCVFGYTTNSGYQA) the chain is on the extracellular side. Residues 248-272 (YVILISLISFFIPFLVILYSFMGIL) traverse the membrane as a helical segment. The Cytoplasmic portion of the chain corresponds to 273–321 (NTLRHNALRIHSYPEGICLSQASKLGLMSLQRPFQMSIDMGFKTRAFTT). The chain crosses the membrane as a helical span at residues 322-345 (ILILFAVFIVCWAPFTTYSLVATF). Over 346-357 (SKHFYYQHNFFE) the chain is Extracellular. A helical transmembrane segment spans residues 358–379 (ISTWLLWLCYLKSALNPLIYYW). Over 380–425 (RIKKFHDACLDMMPKSFKFLPRLPGHTRRRIRPSAVYVCGEHRTVL) the chain is Cytoplasmic.

It belongs to the G-protein coupled receptor 1 family. As to expression, brain specific.

The protein resides in the cell membrane. Functionally, orphan receptor. May play a role in brain function. The sequence is that of Probable G-protein coupled receptor 63 (Gpr63) from Mus musculus (Mouse).